The primary structure comprises 303 residues: Small ribosomal subunit protein uS2 (303 aa).

The interval 258 to 303 (ATLRENAVVTENEVKKTDEEEGASSEAARADAQNEEAVAKPGEEVE) is disordered. Positions 294 to 303 (AVAKPGEEVE) are enriched in basic and acidic residues.

The protein belongs to the universal ribosomal protein uS2 family.

The polypeptide is Small ribosomal subunit protein uS2 (Bifidobacterium animalis subsp. lactis (strain AD011)).